The chain runs to 508 residues: Phenylalanine--tRNA ligase alpha subunit (508 aa).

The residue at position 2 (alanine 2) is an N-acetylalanine. A phosphoserine mark is found at serine 193 and serine 301. Lysine 311 is modified (N6-acetyllysine). Residues threonine 329, 372–374 (QIE), and tyrosine 412 each bind L-phenylalanine. Residue glutamate 414 participates in Mg(2+) binding. Residue phenylalanine 438 coordinates L-phenylalanine.

This sequence belongs to the class-II aminoacyl-tRNA synthetase family. Phe-tRNA synthetase alpha subunit type 2 subfamily. Heterotetramer; dimer of two heterodimers formed by FARSA and FARSB. Requires Mg(2+) as cofactor.

The protein resides in the cytoplasm. It carries out the reaction tRNA(Phe) + L-phenylalanine + ATP = L-phenylalanyl-tRNA(Phe) + AMP + diphosphate + H(+). The polypeptide is Phenylalanine--tRNA ligase alpha subunit (Farsa) (Rattus norvegicus (Rat)).